The following is a 357-amino-acid chain: Peptide chain release factor 1 (357 aa).

Q236 is subject to N5-methylglutamine.

The protein belongs to the prokaryotic/mitochondrial release factor family. Methylated by PrmC. Methylation increases the termination efficiency of RF1.

Its subcellular location is the cytoplasm. Functionally, peptide chain release factor 1 directs the termination of translation in response to the peptide chain termination codons UAG and UAA. The chain is Peptide chain release factor 1 from Mycobacterium ulcerans (strain Agy99).